We begin with the raw amino-acid sequence, 421 residues long: UDP-N-acetylglucosamine 1-carboxyvinyltransferase (421 aa).

Residue 23-24 participates in phosphoenolpyruvate binding; that stretch reads KN. Position 92 (arginine 92) interacts with UDP-N-acetyl-alpha-D-glucosamine. The active-site Proton donor is cysteine 116. Position 116 is a 2-(S-cysteinyl)pyruvic acid O-phosphothioketal (cysteine 116). Residues 121–125, 161–164, aspartate 306, and isoleucine 328 each bind UDP-N-acetyl-alpha-D-glucosamine; these read RPVDL and KVSV.

This sequence belongs to the EPSP synthase family. MurA subfamily.

It is found in the cytoplasm. It catalyses the reaction phosphoenolpyruvate + UDP-N-acetyl-alpha-D-glucosamine = UDP-N-acetyl-3-O-(1-carboxyvinyl)-alpha-D-glucosamine + phosphate. It functions in the pathway cell wall biogenesis; peptidoglycan biosynthesis. Its function is as follows. Cell wall formation. Adds enolpyruvyl to UDP-N-acetylglucosamine. In Vibrio campbellii (strain ATCC BAA-1116), this protein is UDP-N-acetylglucosamine 1-carboxyvinyltransferase.